The following is a 130-amino-acid chain: Small ribosomal subunit protein uS8 (130 aa).

The protein belongs to the universal ribosomal protein uS8 family. In terms of assembly, part of the 30S ribosomal subunit. Contacts proteins S5 and S12.

Its function is as follows. One of the primary rRNA binding proteins, it binds directly to 16S rRNA central domain where it helps coordinate assembly of the platform of the 30S subunit. This chain is Small ribosomal subunit protein uS8, found in Actinobacillus pleuropneumoniae serotype 5b (strain L20).